The following is a 446-amino-acid chain: Chromosomal replication initiator protein DnaA (446 aa).

Residues 1–72 form a domain I, interacts with DnaA modulators region; the sequence is MENILDLWNK…ADTIYELTGE (72 aa). Residues 72 to 109 form a domain II region; that stretch reads EELSIKFIIPQNQDEVEAMPKSPIKKMSKEDPVDIPQN. The tract at residues 110–326 is domain III, AAA+ region; it reads MLNPKYTFDT…GALIRVVAYS (217 aa). ATP is bound by residues Gly154, Gly156, Lys157, and Thr158. The tract at residues 327-446 is domain IV, binds dsDNA; the sequence is SLINKDINAD…HVKEIKEQLK (120 aa).

This sequence belongs to the DnaA family. In terms of assembly, oligomerizes as a right-handed, spiral filament on DNA at oriC.

The protein localises to the cytoplasm. Functionally, plays an essential role in the initiation and regulation of chromosomal replication. ATP-DnaA binds to the origin of replication (oriC) to initiate formation of the DNA replication initiation complex once per cell cycle. Binds the DnaA box (a 9 base pair repeat at the origin) and separates the double-stranded (ds)DNA. Forms a right-handed helical filament on oriC DNA; dsDNA binds to the exterior of the filament while single-stranded (ss)DNA is stabiized in the filament's interior. The ATP-DnaA-oriC complex binds and stabilizes one strand of the AT-rich DNA unwinding element (DUE), permitting loading of DNA polymerase. After initiation quickly degrades to an ADP-DnaA complex that is not apt for DNA replication. Binds acidic phospholipids. In Bacillus pumilus (strain SAFR-032), this protein is Chromosomal replication initiator protein DnaA.